The primary structure comprises 550 residues: MANVVVTGEQLDKSIREVVRILEDAVGCTAGPKGLTVAIGKSYGAPEVTKDGYKVIKSIKPEDPLALAIANIITQSASQCNDKVGDGTTTCSILTAKVIEEVSKAKAAGADIVCIKEGVLKAKEAVLEALMSMKREVLSEEEIAQVATISANGDKNIGSKIAQCVQEVGKDGVITVEESKGFKELDVEKTDGMQFDRGYLSPYFVTNSEKMLVEFENPYILLTEKKLNIIQPILPILENVARSGRPLLIIAEDVEGEALSTLVLNKLRGGLHVAAVKAPGFGDRRKDMLGDIAILTGAKHVISDDLAIKMEDLTLAELGTAKNIRITKDTTTIIGSVDNSSANVQSRINQIKMQIEASTSDYDKEKLRERLAKLSGGVAVLKVGGSSEVEVKERKDRVEDALHATRAAVEEGVVPGGGAALLYTLSVLENLKSKNDDEQLGINIVKRALQAPIKRIIKNSGSENAPCVIAHLLKQNDKELIFNVDTMNFANAFTSGVIDPLKVVRIAFDFAVSLAAVFMTLNAIVVDVPSKDDANAGAGGMGGMGGMGGF.

Residues 29-32 (TAGP), K50, 86-90 (DGTTT), G417, and D499 contribute to the ATP site.

The protein belongs to the chaperonin (HSP60) family. As to quaternary structure, forms a cylinder of 14 subunits composed of two heptameric rings stacked back-to-back. Interacts with the co-chaperonin GroES.

The protein resides in the cytoplasm. It catalyses the reaction ATP + H2O + a folded polypeptide = ADP + phosphate + an unfolded polypeptide.. In terms of biological role, together with its co-chaperonin GroES, plays an essential role in assisting protein folding. The GroEL-GroES system forms a nano-cage that allows encapsulation of the non-native substrate proteins and provides a physical environment optimized to promote and accelerate protein folding. This Ehrlichia chaffeensis protein is Chaperonin GroEL.